We begin with the raw amino-acid sequence, 329 residues long: Interleukin-12 subunit beta (329 aa).

The signal sequence occupies residues 1 to 22; it reads MHPQQLVIAWLSLVLLAPPLMA. The Ig-like C2-type domain occupies 23 to 106; sequence IWELEKNVYV…LSHSFLLIHK (84 aa). Residues Cys50 and Cys90 are joined by a disulfide bond. Residues Asn135 and Asn223 are each glycosylated (N-linked (GlcNAc...) asparagine). Residues 238–329 enclose the Fibronectin type-III domain; it reads PPKNLQLKPL…WSNWASVSCS (92 aa).

Belongs to the IL-12B family. Heterodimer with IL12A; disulfide-linked. The heterodimer is known as interleukin IL-12. Heterodimer with IL23A; disulfide-linked. The heterodimer is known as interleukin IL-23. Also secreted as a monomer. Interacts with NBR1; this interaction promotes IL-12 secretion.

It localises to the secreted. Functionally, cytokine that can act as a growth factor for activated T and NK cells, enhance the lytic activity of NK/lymphokine-activated killer cells, and stimulate the production of IFN-gamma by resting PBMC. In terms of biological role, associates with IL23A to form the IL-23 interleukin, a heterodimeric cytokine which functions in innate and adaptive immunity. IL-23 may constitute with IL-17 an acute response to infection in peripheral tissues. IL-23 binds to a heterodimeric receptor complex composed of IL12RB1 and IL23R, activates the Jak-Stat signaling cascade, stimulates memory rather than naive T-cells and promotes production of pro-inflammatory cytokines. IL-23 induces autoimmune inflammation and thus may be responsible for autoimmune inflammatory diseases and may be important for tumorigenesis. The chain is Interleukin-12 subunit beta (IL12B) from Felis catus (Cat).